Consider the following 418-residue polypeptide: PP2A regulatory subunit TAP46 (418 aa).

The disordered stretch occupies residues lysine 367–glycine 418. 2 stretches are compositionally biased toward basic and acidic residues: residues tryptophan 376–glutamine 385 and glutamate 393–proline 406.

Belongs to the IGBP1/TAP42 family.

Functionally, involved in the regulation of the TOR signaling pathway. Seems to act as a regulator of PP2A catalytic activity. The chain is PP2A regulatory subunit TAP46 from Oryza sativa subsp. japonica (Rice).